Here is a 394-residue protein sequence, read N- to C-terminus: Tubulin-like protein CetZ5 (394 aa).

GTP-binding positions include 10–14 (QAGGN), 110–112 (GTG), Glu-142, Asn-169, and Asn-187.

Belongs to the CetZ family.

It is found in the cytoplasm. Its function is as follows. Involved in cell shape control. The sequence is that of Tubulin-like protein CetZ5 from Haloferax volcanii (strain ATCC 29605 / DSM 3757 / JCM 8879 / NBRC 14742 / NCIMB 2012 / VKM B-1768 / DS2) (Halobacterium volcanii).